The sequence spans 257 residues: ECF RNA polymerase sigma factor SigE (257 aa).

Residues 87 to 153 (MPSWDELVRQ…RITTNLFLDM (67 aa)) form a sigma-70 factor domain-2 region. The short motif at 111 to 114 (NQHD) is the Polymerase core binding element. The segment at 186–236 (SRLGADLQAALDSLPPEFRAAVVLCDIEGLSYEEIGATLGVKLGTVRSRIH) is sigma-70 factor domain-4. Positions 211-230 (DIEGLSYEEIGATLGVKLGT) form a DNA-binding region, H-T-H motif.

This sequence belongs to the sigma-70 factor family. ECF subfamily. In terms of assembly, interacts transiently with the RNA polymerase catalytic core formed by RpoA, RpoB, RpoC and RpoZ (2 alpha, 1 beta, 1 beta' and 1 omega subunit) to form the RNA polymerase holoenzyme that can initiate transcription. Interacts (via sigma-70 factor domain 4) with RseA; interaction is abrogated by treatment of cells with H(2)O(2) or detergent.

Functionally, sigma factors are initiation factors that promote the attachment of RNA polymerase to specific initiation sites and are then released. Extracytoplasmic function (ECF) sigma factors are held in an inactive form by an anti-sigma factor until released. The polypeptide is ECF RNA polymerase sigma factor SigE (sigE) (Mycolicibacterium smegmatis (strain ATCC 700084 / mc(2)155) (Mycobacterium smegmatis)).